A 458-amino-acid polypeptide reads, in one-letter code: GDP-fucose protein O-fucosyltransferase 3 (458 aa).

Residues M1–S11 lie on the Cytoplasmic side of the membrane. Residues F12–L32 traverse the membrane as a helical; Signal-anchor for type II membrane protein segment. Residues G33–D458 are Lumenal-facing. Residues N92, N150, and N300 are each glycosylated (N-linked (GlcNAc...) asparagine). Residues C371 and C374 are joined by a disulfide bond. A glycan (N-linked (GlcNAc...) asparagine) is linked at N445.

Belongs to the glycosyltransferase 10 family.

The protein resides in the endoplasmic reticulum membrane. It catalyses the reaction L-threonyl-[protein] + GDP-beta-L-fucose = 3-O-(alpha-L-fucosyl)-L-threonyl-[protein] + GDP + H(+). It carries out the reaction L-seryl-[protein] + GDP-beta-L-fucose = 3-O-(alpha-L-fucosyl)-L-seryl-[protein] + GDP + H(+). The protein operates within protein modification; protein glycosylation. Protein O-fucosyltransferase that specifically catalyzes O-fucosylation of serine or threonine residues in EMI domains of target proteins. Attaches fucose through an O-glycosidic linkage. O-fucosylation of EMI domain-containing proteins may be required for facilitating protein folding and secretion. The polypeptide is GDP-fucose protein O-fucosyltransferase 3 (fut10) (Danio rerio (Zebrafish)).